Reading from the N-terminus, the 378-residue chain is MKNFNLLAVSSILLVDLFPTHCGHNVDLSRAINLNGVSFNNVDASSLGAAQVRQSASRGRGLGENPKNEEGADKQKKDEKKVEPKKPRENKLKQPPPADGARAEDGARAEDGARAEDGARAEDGARAADGARAADGARAADGARAEDGARAEDGARAEDGARAADGARAADGARAADGARAADGARAADGARAADGARAADGARAEDGAPAGNREGGQAGAGGNQAGGQAGAGGNQAGGQAGAGGNQAGGQAGAGGNQAGGQAGAGGNRAGGQAGAGDAGAGQGQNNEGANMPNAKLVKEYLDKIRSTIGVEWSPCTVTCGKGVRMRRKVSAANKKPEELDVNDLETEVCTMDKCAGIFNVVSNSLGLVILLVLALFN.

The first 22 residues, 1–22 (MKNFNLLAVSSILLVDLFPTHC), serve as a signal peptide directing secretion. The tract at residues 50 to 291 (AQVRQSASRG…GQGQNNEGAN (242 aa)) is disordered. 2 stretches are compositionally biased toward basic and acidic residues: residues 66–92 (PKNE…ENKL) and 101–126 (ARAE…DGAR). The segment at 80-88 (KKVEPKKPR) is required for the binding to heparan sulfate proteoglycans (HSPGs) on the surface of host hepatocytes. The region I; contains the proteolytic cleavage site stretch occupies residues 91-95 (KLKQP). Tandem repeats lie at residues 99 to 104 (DGARAE), 105 to 110 (DGARAE), 111 to 116 (DGARAE), 117 to 122 (DGARAE), 123 to 128 (DGARAA), 129 to 134 (DGARAA), 135 to 140 (DGARAA), 141 to 146 (DGARAE), 147 to 152 (DGARAE), 153 to 158 (DGARAE), 159 to 164 (DGARAA), 165 to 170 (DGARAA), 171 to 176 (DGARAA), 177 to 182 (DGARAA), 183 to 188 (DGARAA), 189 to 194 (DGARAA), 195 to 200 (DGARAA), 201 to 206 (DGARAE), 212 to 222 (GNREGGQAGAG), 223 to 233 (GNQAGGQAGAG), 234 to 244 (GNQAGGQAGAG), 245 to 255 (GNQAGGQAGAG), 256 to 266 (GNQAGGQAGAG), and 267 to 277 (GNRAGGQAGAG). The interval 99–206 (DGARAEDGAR…ARAADGARAE (108 aa)) is 18 X 6 AA tandem repeats of D-G-A-R-A-[EA]. The span at 127–140 (AADGARAADGARAA) shows a compositional bias: low complexity. The segment covering 141-162 (DGARAEDGARAEDGARAEDGAR) has biased composition (basic and acidic residues). Over residues 163–200 (AADGARAADGARAADGARAADGARAADGARAADGARAA) the composition is skewed to low complexity. Residues 212–277 (GNREGGQAGA…NRAGGQAGAG (66 aa)) are 6 X 11 AA tandem repeats of G-N-[QR]-[AE]-G-G-Q-A-G-A-G. A compositionally biased stretch (gly residues) spans 214-283 (REGGQAGAGG…AGAGDAGAGQ (70 aa)). Residues 304–356 (KIRSTIGVEWSPCTVTCGKGVRMRRKVSAANKKPEELDVNDLETEVCTMDKCA) enclose the TSP type-1 domain. Intrachain disulfides connect Cys-316-Cys-350 and Cys-320-Cys-355. Thr-319 carries O-linked (Fuc) threonine glycosylation. The GPI-anchor amidated cysteine moiety is linked to residue Cys-355. Residues 356–378 (AGIFNVVSNSLGLVILLVLALFN) constitute a propeptide, removed in mature form.

This sequence belongs to the plasmodium circumsporozoite protein family. Post-translationally, during host cell invasion, proteolytically cleaved at the cell membrane in the region I by a papain-like cysteine protease of parasite origin. Cleavage is triggered by the sporozoite contact with highly sulfated heparan sulfate proteoglycans (HSPGs) present on the host hepatocyte cell surface. Cleavage exposes the TSP type-1 (TSR) domain and is required for productive invasion of host hepatocytes but not for adhesion to the host cell membrane. Cleavage is dispensable for sporozoite development in the oocyst, motility and for traversal of host and vector cells. In terms of processing, O-glycosylated; maybe by POFUT2.

The protein resides in the cell membrane. Its subcellular location is the cytoplasm. In terms of biological role, essential sporozoite protein. In the mosquito vector, required for sporozoite development in the oocyst, migration through the vector hemolymph and entry into the vector salivary glands. In the vertebrate host, required for sporozoite migration through the host dermis and infection of host hepatocytes. Binds to highly sulfated heparan sulfate proteoglycans (HSPGs) on the surface of host hepatocytes. Functionally, in the vertebrate host, binds to highly sulfated heparan sulfate proteoglycans (HSPGs) on the surface of host hepatocytes and is required for sporozoite invasion of the host hepatocytes. In Plasmodium cynomolgi (strain London), this protein is Circumsporozoite protein.